The following is a 68-amino-acid chain: MAKNLVPSDAKLEITQIKGVIGVKQNQRETLRSLGLKRIGHTVVRSADAVTVGMLNTVPHLVNVEEAK.

Belongs to the universal ribosomal protein uL30 family. In terms of assembly, part of the 50S ribosomal subunit.

This Pseudarthrobacter chlorophenolicus (strain ATCC 700700 / DSM 12829 / CIP 107037 / JCM 12360 / KCTC 9906 / NCIMB 13794 / A6) (Arthrobacter chlorophenolicus) protein is Large ribosomal subunit protein uL30.